Consider the following 235-residue polypeptide: Small ribosomal subunit protein mS23 (235 aa).

Residues 51–71 (PYPIQHTEPKDRGRAAQRPRN) are disordered.

Belongs to the mitochondrion-specific ribosomal protein mS23 family. In terms of assembly, component of the mitochondrial small ribosomal subunit.

Its subcellular location is the mitochondrion. The protein is Small ribosomal subunit protein mS23 (RSM25) of Chaetomium globosum (strain ATCC 6205 / CBS 148.51 / DSM 1962 / NBRC 6347 / NRRL 1970) (Soil fungus).